Consider the following 529-residue polypeptide: Ectonucleoside triphosphate diphosphohydrolase 3 (529 aa).

Topologically, residues Met1 to Pro22 are cytoplasmic. A helical membrane pass occupies residues Ala23–Ile43. At Gln44 to Pro485 the chain is on the extracellular side. The N-linked (GlcNAc...) asparagine glycan is linked to Asn81. Cys92 and Cys116 are disulfide-bonded. N-linked (GlcNAc...) asparagine glycosylation occurs at Asn149. Glu182 (proton acceptor) is an active-site residue. Gly222 to Gln226 contacts ATP. N-linked (GlcNAc...) asparagine glycosylation is found at Asn238, Asn284, and Asn318. 3 cysteine pairs are disulfide-bonded: Cys261-Cys308, Cys289-Cys334, and Cys347-Cys353. 2 N-linked (GlcNAc...) asparagine glycosylation sites follow: Asn381 and Asn392. Cysteines 399 and 422 form a disulfide. Asn454 carries N-linked (GlcNAc...) asparagine glycosylation. The helical transmembrane segment at Val486–Leu506 threads the bilayer. Residues Tyr507 to Asp529 are Cytoplasmic-facing.

It belongs to the GDA1/CD39 NTPase family. Ca(2+) is required as a cofactor. It depends on Mg(2+) as a cofactor.

It is found in the cell membrane. The catalysed reaction is a ribonucleoside 5'-triphosphate + 2 H2O = a ribonucleoside 5'-phosphate + 2 phosphate + 2 H(+). Its function is as follows. Catalyzes the hydrolysis of nucleoside triphosphates and diphosphates. Has a threefold preference for the hydrolysis of ATP and UTP over ADP and UDP. This Mus musculus (Mouse) protein is Ectonucleoside triphosphate diphosphohydrolase 3.